We begin with the raw amino-acid sequence, 353 residues long: Phosphoribosylformylglycinamidine cyclo-ligase (353 aa).

The protein belongs to the AIR synthase family.

The protein resides in the cytoplasm. It catalyses the reaction 2-formamido-N(1)-(5-O-phospho-beta-D-ribosyl)acetamidine + ATP = 5-amino-1-(5-phospho-beta-D-ribosyl)imidazole + ADP + phosphate + H(+). The protein operates within purine metabolism; IMP biosynthesis via de novo pathway; 5-amino-1-(5-phospho-D-ribosyl)imidazole from N(2)-formyl-N(1)-(5-phospho-D-ribosyl)glycinamide: step 2/2. The polypeptide is Phosphoribosylformylglycinamidine cyclo-ligase (Magnetococcus marinus (strain ATCC BAA-1437 / JCM 17883 / MC-1)).